Consider the following 176-residue polypeptide: Pituitary adenylate cyclase-activating polypeptide (176 aa).

An N-terminal signal peptide occupies residues 1-24 (MTMCSGARLALLVYGIIMHSSVYC). Positions 25-80 (SPAAAGLRFPGIRPEDEAYDEDGNPLQDFYDSDPPGVGGPASTLRDAYALYYPAEE) are excised as a propeptide. The important for receptor binding stretch occupies residues 150–158 (VKKYLAAVL). Leu158 is modified (leucine amide). Lys169 carries the lysine amide modification. A propeptide spanning residues 173–176 (IAYL) is cleaved from the precursor.

This sequence belongs to the glucagon family.

Its subcellular location is the secreted. In terms of biological role, PACAP is a neuropeptide involved in diverse array of physiological processes through activating the PACAP subfamily of class B1 G protein-coupled receptors: VIP receptor 1 (VIPR1), VIP receptor 2 (VIPR2), and PACAP type I receptor (ADCYAP1R1). Exerts neuroprotective and general cytoprotective effects due to anti-apoptotic, anti-inflammatory, and antioxidant actions. Promotes neuron projection development through the RAPGEF2/Rap1/B-Raf/ERK pathway. In chromaffin cells, induces long-lasting increase of intracellular calcium concentrations and neuroendocrine secretion. Involved in the control of glucose homeostasis, induces insulin secretion by pancreatic beta cells. PACAP exists in two bioactive forms from proteolysis of the same precursor protein, PACAP27 and PACAP38, which differ by eleven amino acid residues in the C-terminus. The polypeptide is Pituitary adenylate cyclase-activating polypeptide (ADCYAP1) (Sus scrofa (Pig)).